The sequence spans 142 residues: Large ribosomal subunit protein uL11 (142 aa).

The protein belongs to the universal ribosomal protein uL11 family. In terms of assembly, part of the ribosomal stalk of the 50S ribosomal subunit. Interacts with L10 and the large rRNA to form the base of the stalk. L10 forms an elongated spine to which L12 dimers bind in a sequential fashion forming a multimeric L10(L12)X complex. Post-translationally, one or more lysine residues are methylated.

Functionally, forms part of the ribosomal stalk which helps the ribosome interact with GTP-bound translation factors. This is Large ribosomal subunit protein uL11 from Vibrio campbellii (strain ATCC BAA-1116).